The primary structure comprises 474 residues: Bifunctional protein HldE (474 aa).

The ribokinase stretch occupies residues 1-318 (MKLSMPRFDQ…RAIQREEGSE (318 aa)). 194–197 (NLSE) contacts ATP. The active site involves aspartate 263. Residues 343 to 474 (FTNGCFDILH…AIVEKIRGQG (132 aa)) are cytidylyltransferase.

It in the N-terminal section; belongs to the carbohydrate kinase PfkB family. In the C-terminal section; belongs to the cytidylyltransferase family. Homodimer.

It catalyses the reaction D-glycero-beta-D-manno-heptose 7-phosphate + ATP = D-glycero-beta-D-manno-heptose 1,7-bisphosphate + ADP + H(+). It carries out the reaction D-glycero-beta-D-manno-heptose 1-phosphate + ATP + H(+) = ADP-D-glycero-beta-D-manno-heptose + diphosphate. It functions in the pathway nucleotide-sugar biosynthesis; ADP-L-glycero-beta-D-manno-heptose biosynthesis; ADP-L-glycero-beta-D-manno-heptose from D-glycero-beta-D-manno-heptose 7-phosphate: step 1/4. It participates in nucleotide-sugar biosynthesis; ADP-L-glycero-beta-D-manno-heptose biosynthesis; ADP-L-glycero-beta-D-manno-heptose from D-glycero-beta-D-manno-heptose 7-phosphate: step 3/4. Functionally, catalyzes the phosphorylation of D-glycero-D-manno-heptose 7-phosphate at the C-1 position to selectively form D-glycero-beta-D-manno-heptose-1,7-bisphosphate. Its function is as follows. Catalyzes the ADP transfer from ATP to D-glycero-beta-D-manno-heptose 1-phosphate, yielding ADP-D-glycero-beta-D-manno-heptose. In Pseudomonas savastanoi pv. phaseolicola (strain 1448A / Race 6) (Pseudomonas syringae pv. phaseolicola (strain 1448A / Race 6)), this protein is Bifunctional protein HldE.